We begin with the raw amino-acid sequence, 338 residues long: Methionyl-tRNA formyltransferase (338 aa).

Position 110–113 (110–113 (SLLP)) interacts with (6S)-5,6,7,8-tetrahydrofolate.

Belongs to the Fmt family.

The enzyme catalyses L-methionyl-tRNA(fMet) + (6R)-10-formyltetrahydrofolate = N-formyl-L-methionyl-tRNA(fMet) + (6S)-5,6,7,8-tetrahydrofolate + H(+). In terms of biological role, attaches a formyl group to the free amino group of methionyl-tRNA(fMet). The formyl group appears to play a dual role in the initiator identity of N-formylmethionyl-tRNA by promoting its recognition by IF2 and preventing the misappropriation of this tRNA by the elongation apparatus. The sequence is that of Methionyl-tRNA formyltransferase from Synechococcus sp. (strain CC9902).